Consider the following 493-residue polypeptide: Membrane-bound lytic murein transglycosylase F (493 aa).

An N-terminal signal peptide occupies residues 1–21 (MKRLRFNYLLIGLITVLLALA). Positions 22 to 268 (LWPSIPWYGG…RLDEKYLGHV (247 aa)) are non-LT domain. Residues 269 to 493 (GTFDYVDTRT…LNPVSALPLP (225 aa)) form an LT domain region. E313 is a catalytic residue.

It in the N-terminal section; belongs to the bacterial solute-binding protein 3 family. The protein in the C-terminal section; belongs to the transglycosylase Slt family.

The protein localises to the cell outer membrane. The catalysed reaction is Exolytic cleavage of the (1-&gt;4)-beta-glycosidic linkage between N-acetylmuramic acid (MurNAc) and N-acetylglucosamine (GlcNAc) residues in peptidoglycan, from either the reducing or the non-reducing ends of the peptidoglycan chains, with concomitant formation of a 1,6-anhydrobond in the MurNAc residue.. Murein-degrading enzyme that degrades murein glycan strands and insoluble, high-molecular weight murein sacculi, with the concomitant formation of a 1,6-anhydromuramoyl product. Lytic transglycosylases (LTs) play an integral role in the metabolism of the peptidoglycan (PG) sacculus. Their lytic action creates space within the PG sacculus to allow for its expansion as well as for the insertion of various structures such as secretion systems and flagella. In Erwinia tasmaniensis (strain DSM 17950 / CFBP 7177 / CIP 109463 / NCPPB 4357 / Et1/99), this protein is Membrane-bound lytic murein transglycosylase F.